Reading from the N-terminus, the 343-residue chain is Dihydroorotase (343 aa).

2 residues coordinate Zn(2+): His-13 and His-15. Substrate is bound by residues 15–17 (HLR) and Asn-41. Lys-99, His-136, and His-174 together coordinate Zn(2+). Position 99 is an N6-carboxylysine (Lys-99). Substrate is bound at residue His-136. Leu-219 is a substrate binding site. Asp-247 lines the Zn(2+) pocket. The active site involves Asp-247. Residues His-251 and Ala-263 each coordinate substrate.

The protein belongs to the metallo-dependent hydrolases superfamily. DHOase family. Class II DHOase subfamily. Homodimer. Requires Zn(2+) as cofactor.

It carries out the reaction (S)-dihydroorotate + H2O = N-carbamoyl-L-aspartate + H(+). The protein operates within pyrimidine metabolism; UMP biosynthesis via de novo pathway; (S)-dihydroorotate from bicarbonate: step 3/3. Catalyzes the reversible cyclization of carbamoyl aspartate to dihydroorotate. This chain is Dihydroorotase, found in Shewanella baltica (strain OS223).